The sequence spans 900 residues: Phosphoenolpyruvate carboxylase (900 aa).

Residues H140 and K568 contribute to the active site.

This sequence belongs to the PEPCase type 1 family. It depends on Mg(2+) as a cofactor.

It catalyses the reaction oxaloacetate + phosphate = phosphoenolpyruvate + hydrogencarbonate. Forms oxaloacetate, a four-carbon dicarboxylic acid source for the tricarboxylic acid cycle. The polypeptide is Phosphoenolpyruvate carboxylase (Neisseria meningitidis serogroup A / serotype 4A (strain DSM 15465 / Z2491)).